Here is a 431-residue protein sequence, read N- to C-terminus: UDP-N-acetylmuramate--L-alanine ligase (431 aa).

108 to 114 (GAHGKST) lines the ATP pocket.

This sequence belongs to the MurCDEF family.

It is found in the cytoplasm. The catalysed reaction is UDP-N-acetyl-alpha-D-muramate + L-alanine + ATP = UDP-N-acetyl-alpha-D-muramoyl-L-alanine + ADP + phosphate + H(+). Its pathway is cell wall biogenesis; peptidoglycan biosynthesis. In terms of biological role, cell wall formation. The protein is UDP-N-acetylmuramate--L-alanine ligase of Campylobacter jejuni subsp. doylei (strain ATCC BAA-1458 / RM4099 / 269.97).